We begin with the raw amino-acid sequence, 446 residues long: Histidine--tRNA ligase (446 aa).

The protein belongs to the class-II aminoacyl-tRNA synthetase family. Homodimer.

The protein localises to the cytoplasm. The enzyme catalyses tRNA(His) + L-histidine + ATP = L-histidyl-tRNA(His) + AMP + diphosphate + H(+). The sequence is that of Histidine--tRNA ligase from Burkholderia vietnamiensis (strain G4 / LMG 22486) (Burkholderia cepacia (strain R1808)).